The chain runs to 1118 residues: uncharacterized protein (1118 aa).

Disordered stretches follow at residues 1-69, 1044-1071, and 1090-1118; these read MESG…NGED, PKSVSSSSSLGRKRGRKRENSEEEEKID, and IRPTVNVEEDQNIKTEIEDSDDLEDSFEL. Acidic residues predominate over residues 13-34; that stretch reads DMVEEDNDEDSFEEPACEDSFD. The segment covering 35-60 has biased composition (polar residues); the sequence is SQEASSKANEPQNDSFDEPIQSSVSK. A compositionally biased stretch (acidic residues) spans 1107–1118; that stretch reads EDSDDLEDSFEL.

This is an uncharacterized protein from Caenorhabditis elegans.